Reading from the N-terminus, the 286-residue chain is ATP synthase gamma chain (286 aa).

The protein belongs to the ATPase gamma chain family. In terms of assembly, F-type ATPases have 2 components, CF(1) - the catalytic core - and CF(0) - the membrane proton channel. CF(1) has five subunits: alpha(3), beta(3), gamma(1), delta(1), epsilon(1). CF(0) has three main subunits: a, b and c.

Its subcellular location is the cell membrane. Produces ATP from ADP in the presence of a proton gradient across the membrane. The gamma chain is believed to be important in regulating ATPase activity and the flow of protons through the CF(0) complex. The protein is ATP synthase gamma chain of Bacillus anthracis (strain A0248).